Here is a 258-residue protein sequence, read N- to C-terminus: Putative cysteine-rich repeat secretory protein 61 (258 aa).

Residues 1 to 31 (MSSSFIPKRIALVLNLAMVAIQVFFIRSVSS) form the signal peptide. Gnk2-homologous domains lie at 38–140 (YLYH…PTAF) and 146–253 (DKNK…IYPF).

It belongs to the cysteine-rich repeat secretory protein family.

It localises to the secreted. The sequence is that of Putative cysteine-rich repeat secretory protein 61 (CRRSP61) from Arabidopsis thaliana (Mouse-ear cress).